A 328-amino-acid polypeptide reads, in one-letter code: Ferredoxin--NADP reductase (328 aa).

FAD-binding residues include glutamate 36, glutamine 44, tyrosine 49, valine 89, phenylalanine 123, aspartate 284, and threonine 324.

This sequence belongs to the ferredoxin--NADP reductase type 2 family. In terms of assembly, homodimer. It depends on FAD as a cofactor.

It carries out the reaction 2 reduced [2Fe-2S]-[ferredoxin] + NADP(+) + H(+) = 2 oxidized [2Fe-2S]-[ferredoxin] + NADPH. In Lacticaseibacillus paracasei (strain ATCC 334 / BCRC 17002 / CCUG 31169 / CIP 107868 / KCTC 3260 / NRRL B-441) (Lactobacillus paracasei), this protein is Ferredoxin--NADP reductase.